Reading from the N-terminus, the 428-residue chain is Glutamate-1-semialdehyde 2,1-aminomutase (428 aa).

Lys267 bears the N6-(pyridoxal phosphate)lysine mark.

Belongs to the class-III pyridoxal-phosphate-dependent aminotransferase family. HemL subfamily. Homodimer. Pyridoxal 5'-phosphate serves as cofactor.

Its subcellular location is the cytoplasm. It carries out the reaction (S)-4-amino-5-oxopentanoate = 5-aminolevulinate. It functions in the pathway porphyrin-containing compound metabolism; protoporphyrin-IX biosynthesis; 5-aminolevulinate from L-glutamyl-tRNA(Glu): step 2/2. This Flavobacterium psychrophilum (strain ATCC 49511 / DSM 21280 / CIP 103535 / JIP02/86) protein is Glutamate-1-semialdehyde 2,1-aminomutase.